The sequence spans 173 residues: Mesencephalic astrocyte-derived neurotrophic factor homolog (173 aa).

The N-terminal stretch at 1–22 is a signal peptide; it reads MNTSQIVLMFCLVVGVAQTALA. Intrachain disulfides connect cysteine 28/cysteine 114, cysteine 31/cysteine 103, cysteine 61/cysteine 72, and cysteine 148/cysteine 151.

The protein belongs to the ARMET family.

It is found in the secreted. Required during the maturation of the embryonic nervous system for maintenance of neuronal and cuticular connectivity. Essential for maintenance of dopaminergic neurons and dopamine levels. The protein is Mesencephalic astrocyte-derived neurotrophic factor homolog of Drosophila grimshawi (Hawaiian fruit fly).